A 392-amino-acid chain; its full sequence is Phospho-N-acetylmuramoyl-pentapeptide-transferase (392 aa).

10 helical membrane-spanning segments follow: residues 28–48, 74–94, 100–120, 137–157, 193–213, 225–245, 262–282, 289–309, 314–334, and 369–389; these read RALM…PYVI, TPTM…LMWF, FVWI…VDDW, YFWQ…SISE, VSYP…IVGA, GLAI…AYVT, SGEL…FLWF, VFMG…IAVI, IVFF…MAQV, and QVVV…LSTL.

This sequence belongs to the glycosyltransferase 4 family. MraY subfamily. It depends on Mg(2+) as a cofactor.

It localises to the cell inner membrane. It carries out the reaction UDP-N-acetyl-alpha-D-muramoyl-L-alanyl-gamma-D-glutamyl-meso-2,6-diaminopimeloyl-D-alanyl-D-alanine + di-trans,octa-cis-undecaprenyl phosphate = di-trans,octa-cis-undecaprenyl diphospho-N-acetyl-alpha-D-muramoyl-L-alanyl-D-glutamyl-meso-2,6-diaminopimeloyl-D-alanyl-D-alanine + UMP. It functions in the pathway cell wall biogenesis; peptidoglycan biosynthesis. Catalyzes the initial step of the lipid cycle reactions in the biosynthesis of the cell wall peptidoglycan: transfers peptidoglycan precursor phospho-MurNAc-pentapeptide from UDP-MurNAc-pentapeptide onto the lipid carrier undecaprenyl phosphate, yielding undecaprenyl-pyrophosphoryl-MurNAc-pentapeptide, known as lipid I. The chain is Phospho-N-acetylmuramoyl-pentapeptide-transferase from Variovorax paradoxus (strain S110).